The chain runs to 1260 residues: ATP-dependent helicase/deoxyribonuclease subunit B (1260 aa).

Belongs to the helicase family. AddB/RexB type 2 subfamily. In terms of assembly, heterodimer of AddA and RexB. Requires Mg(2+) as cofactor.

The heterodimer acts as both an ATP-dependent DNA helicase and an ATP-dependent, dual-direction single-stranded exonuclease. Recognizes the chi site generating a DNA molecule suitable for the initiation of homologous recombination. This subunit has 5' -&gt; 3' nuclease activity but not helicase activity. This is ATP-dependent helicase/deoxyribonuclease subunit B from Limosilactobacillus reuteri (strain DSM 20016) (Lactobacillus reuteri).